A 305-amino-acid polypeptide reads, in one-letter code: Ribosomal RNA small subunit methyltransferase H (305 aa).

Residues 33-35, aspartate 52, aspartate 97, and glutamine 104 contribute to the S-adenosyl-L-methionine site; that span reads GGH.

The protein belongs to the methyltransferase superfamily. RsmH family.

The protein resides in the cytoplasm. The catalysed reaction is cytidine(1402) in 16S rRNA + S-adenosyl-L-methionine = N(4)-methylcytidine(1402) in 16S rRNA + S-adenosyl-L-homocysteine + H(+). Specifically methylates the N4 position of cytidine in position 1402 (C1402) of 16S rRNA. This Campylobacter lari (strain RM2100 / D67 / ATCC BAA-1060) protein is Ribosomal RNA small subunit methyltransferase H.